The following is a 432-amino-acid chain: Adenylosuccinate synthetase (432 aa).

GTP is bound by residues G13–K19 and G41–T43. Catalysis depends on D14, which acts as the Proton acceptor. Residues D14 and G41 each coordinate Mg(2+). IMP contacts are provided by residues D14–K17, N39–H42, T130, R144, Q225, T240, and R304. H42 serves as the catalytic Proton donor. Position 300–306 (A300–R306) interacts with substrate. Residues R306, K332–D334, and S415–G417 contribute to the GTP site.

This sequence belongs to the adenylosuccinate synthetase family. Homodimer. It depends on Mg(2+) as a cofactor.

The protein resides in the cytoplasm. It catalyses the reaction IMP + L-aspartate + GTP = N(6)-(1,2-dicarboxyethyl)-AMP + GDP + phosphate + 2 H(+). It participates in purine metabolism; AMP biosynthesis via de novo pathway; AMP from IMP: step 1/2. Its function is as follows. Plays an important role in the de novo pathway of purine nucleotide biosynthesis. Catalyzes the first committed step in the biosynthesis of AMP from IMP. The chain is Adenylosuccinate synthetase from Vibrio cholerae serotype O1 (strain ATCC 39541 / Classical Ogawa 395 / O395).